The chain runs to 637 residues: tRNA uridine 5-carboxymethylaminomethyl modification enzyme MnmG (637 aa).

Residues 15–20 (GAGHAG), Ile127, and Ser182 each bind FAD. 276–290 (GPRYCPSIEDKIVRF) lines the NAD(+) pocket. Gln373 provides a ligand contact to FAD.

Belongs to the MnmG family. In terms of assembly, homodimer. Heterotetramer of two MnmE and two MnmG subunits. It depends on FAD as a cofactor.

It is found in the cytoplasm. NAD-binding protein involved in the addition of a carboxymethylaminomethyl (cmnm) group at the wobble position (U34) of certain tRNAs, forming tRNA-cmnm(5)s(2)U34. This is tRNA uridine 5-carboxymethylaminomethyl modification enzyme MnmG from Streptococcus pneumoniae (strain Hungary19A-6).